The chain runs to 360 residues: Histidinol-phosphate aminotransferase (360 aa).

The residue at position 218 (Lys-218) is an N6-(pyridoxal phosphate)lysine.

Belongs to the class-II pyridoxal-phosphate-dependent aminotransferase family. Histidinol-phosphate aminotransferase subfamily. In terms of assembly, homodimer. The cofactor is pyridoxal 5'-phosphate.

It catalyses the reaction L-histidinol phosphate + 2-oxoglutarate = 3-(imidazol-4-yl)-2-oxopropyl phosphate + L-glutamate. It participates in amino-acid biosynthesis; L-histidine biosynthesis; L-histidine from 5-phospho-alpha-D-ribose 1-diphosphate: step 7/9. This Chlorobium phaeovibrioides (strain DSM 265 / 1930) (Prosthecochloris vibrioformis (strain DSM 265)) protein is Histidinol-phosphate aminotransferase.